The following is a 681-amino-acid chain: Minichromosome maintenance domain-containing protein 2 (681 aa).

Ser-292 carries the phosphoserine modification. In terms of domain architecture, MCM spans 533–621; it reads KQFTTEDFEK…LIAALLLEIS (89 aa).

In terms of tissue distribution, predominantly expressed in the gonads and the brain. Not detected in the heart, lung, nor embryonic fibroblasts.

Functionally, plays an important role in meiotic recombination and associated DNA double-strand break repair. The sequence is that of Minichromosome maintenance domain-containing protein 2 (Mcmdc2) from Mus musculus (Mouse).